The following is a 185-amino-acid chain: MKINREIPVRQRNIVLIGFMGVGKTTIGQLVAKKLYRDFIDVDQEIEKKYNMTIPEMFQQKGEAFFRQAEKDYIVDLCEHTQLKIVSLGGGAFKQEEIKRACLKHCTVLFLDLSWENWKQRLDILIENRPVLHNRTLDEMKELFEERREIYSLHNSRVETDHLEAEEVANYIVDTLKLGWDLYSK.

Position 21–26 (21–26) interacts with ATP; it reads GVGKTT. T25 serves as a coordination point for Mg(2+). Positions 43, 67, and 90 each coordinate substrate. ATP is bound at residue R129. R147 contributes to the substrate binding site.

It belongs to the shikimate kinase family. In terms of assembly, monomer. Requires Mg(2+) as cofactor.

The protein localises to the cytoplasm. It carries out the reaction shikimate + ATP = 3-phosphoshikimate + ADP + H(+). Its pathway is metabolic intermediate biosynthesis; chorismate biosynthesis; chorismate from D-erythrose 4-phosphate and phosphoenolpyruvate: step 5/7. In terms of biological role, catalyzes the specific phosphorylation of the 3-hydroxyl group of shikimic acid using ATP as a cosubstrate. The sequence is that of Shikimate kinase from Bacillus pumilus (strain SAFR-032).